The chain runs to 779 residues: Probable glutamine--tRNA ligase (779 aa).

ATP is bound by residues Glu-268–Asn-270 and His-274–Ala-280. L-glutamine-binding residues include Asp-300 and Tyr-440. ATP is bound by residues Thr-459, Arg-488–Leu-489, and Leu-496–Lys-498.

This sequence belongs to the class-I aminoacyl-tRNA synthetase family.

The catalysed reaction is tRNA(Gln) + L-glutamine + ATP = L-glutaminyl-tRNA(Gln) + AMP + diphosphate. The protein is Probable glutamine--tRNA ligase (glnS) of Dictyostelium discoideum (Social amoeba).